A 76-amino-acid polypeptide reads, in one-letter code: Small ribosomal subunit protein bS18 (76 aa).

Belongs to the bacterial ribosomal protein bS18 family. In terms of assembly, part of the 30S ribosomal subunit. Forms a tight heterodimer with protein bS6.

Binds as a heterodimer with protein bS6 to the central domain of the 16S rRNA, where it helps stabilize the platform of the 30S subunit. The protein is Small ribosomal subunit protein bS18 of Xanthomonas campestris pv. campestris (strain 8004).